The primary structure comprises 161 residues: Nucleotide-binding protein Bcep18194_A5887 (161 aa).

Belongs to the YajQ family.

Nucleotide-binding protein. This is Nucleotide-binding protein Bcep18194_A5887 from Burkholderia lata (strain ATCC 17760 / DSM 23089 / LMG 22485 / NCIMB 9086 / R18194 / 383).